The primary structure comprises 615 residues: Isocitrate dehydrogenase kinase/phosphatase (615 aa).

Residues 325–331 (APGIKGM) and Lys346 each bind ATP. The active site involves Asp381.

Belongs to the AceK family.

Its subcellular location is the cytoplasm. The enzyme catalyses L-seryl-[isocitrate dehydrogenase] + ATP = O-phospho-L-seryl-[isocitrate dehydrogenase] + ADP + H(+). Bifunctional enzyme which can phosphorylate or dephosphorylate isocitrate dehydrogenase (IDH) on a specific serine residue. This is a regulatory mechanism which enables bacteria to bypass the Krebs cycle via the glyoxylate shunt in response to the source of carbon. When bacteria are grown on glucose, IDH is fully active and unphosphorylated, but when grown on acetate or ethanol, the activity of IDH declines drastically concomitant with its phosphorylation. This chain is Isocitrate dehydrogenase kinase/phosphatase, found in Albidiferax ferrireducens (strain ATCC BAA-621 / DSM 15236 / T118) (Rhodoferax ferrireducens).